Reading from the N-terminus, the 81-residue chain is Neuronatin (81 aa).

It belongs to the neuronatin family.

May participate in the maintenance of segment identity in the hindbrain and pituitary development, and maturation or maintenance of the overall structure of the nervous system. May function as a regulatory subunit of ion channels. The protein is Neuronatin (NNAT) of Sus scrofa (Pig).